The following is a 161-amino-acid chain: Ribosomal RNA large subunit methyltransferase H (161 aa).

S-adenosyl-L-methionine contacts are provided by residues Leu-78, Gly-110, and 129-134 (LGRMTF).

Belongs to the RNA methyltransferase RlmH family. As to quaternary structure, homodimer.

It localises to the cytoplasm. It catalyses the reaction pseudouridine(1915) in 23S rRNA + S-adenosyl-L-methionine = N(3)-methylpseudouridine(1915) in 23S rRNA + S-adenosyl-L-homocysteine + H(+). In terms of biological role, specifically methylates the pseudouridine at position 1915 (m3Psi1915) in 23S rRNA. In Symbiobacterium thermophilum (strain DSM 24528 / JCM 14929 / IAM 14863 / T), this protein is Ribosomal RNA large subunit methyltransferase H.